The primary structure comprises 567 residues: Urease subunit alpha (567 aa).

The 439-residue stretch at 129–567 folds into the Urease domain; the sequence is GGVDTHIHFI…LPMAQRYFLF (439 aa). Positions 134, 136, and 217 each coordinate Ni(2+). The residue at position 217 (Lys-217) is an N6-carboxylysine. Residue His-219 coordinates substrate. Positions 246 and 272 each coordinate Ni(2+). The Proton donor role is filled by His-320. Position 360 (Asp-360) interacts with Ni(2+).

The protein belongs to the metallo-dependent hydrolases superfamily. Urease alpha subunit family. Heterotrimer of UreA (gamma), UreB (beta) and UreC (alpha) subunits. Three heterotrimers associate to form the active enzyme. Requires Ni cation as cofactor. In terms of processing, carboxylation allows a single lysine to coordinate two nickel ions.

The protein localises to the cytoplasm. The catalysed reaction is urea + 2 H2O + H(+) = hydrogencarbonate + 2 NH4(+). The protein operates within nitrogen metabolism; urea degradation; CO(2) and NH(3) from urea (urease route): step 1/1. The chain is Urease subunit alpha from Proteus hauseri.